Consider the following 98-residue polypeptide: NADH-ubiquinone oxidoreductase chain 4L (98 aa).

The next 3 helical transmembrane spans lie at 1-21, 29-49, and 61-81; these read MSMVYINIFLAFIMSLMGLLM, SLLCLEGMMLSLFIMMTMVVL, and IILLVFAACEAALGLSLLVMV.

The protein belongs to the complex I subunit 4L family. Core subunit of respiratory chain NADH dehydrogenase (Complex I) which is composed of 45 different subunits.

The protein resides in the mitochondrion inner membrane. The catalysed reaction is a ubiquinone + NADH + 5 H(+)(in) = a ubiquinol + NAD(+) + 4 H(+)(out). In terms of biological role, core subunit of the mitochondrial membrane respiratory chain NADH dehydrogenase (Complex I) which catalyzes electron transfer from NADH through the respiratory chain, using ubiquinone as an electron acceptor. Part of the enzyme membrane arm which is embedded in the lipid bilayer and involved in proton translocation. The chain is NADH-ubiquinone oxidoreductase chain 4L (MT-ND4L) from Acinonyx jubatus (Cheetah).